The primary structure comprises 213 residues: MKIVLATSNLDKVKEIKEFLKGYEIYALSEVVKPFEIVEDGSTFQANALIKSRAVFAKLKELGLEDEFVSLSDDSGISVDALGGEPGIYSARYFDLDENGKVCGKNANDANNRAKLISKLKALNLKSSPAHYTACIAISSKFGDYTAHGFMYGEAIDEERGTNGFGYDALFIPNGFNKTLGELDNETKLKISHRSKGLELANFVLKSLKKNFS.

7-12 is a binding site for substrate; that stretch reads TSNLDK. Residue D74 is the Proton acceptor of the active site. Residue D74 participates in Mg(2+) binding. Residues S75, 165-168, K188, and 193-194 each bind substrate; these read FGYD and HR.

This sequence belongs to the HAM1 NTPase family. As to quaternary structure, homodimer. The cofactor is Mg(2+).

The catalysed reaction is XTP + H2O = XMP + diphosphate + H(+). The enzyme catalyses dITP + H2O = dIMP + diphosphate + H(+). It carries out the reaction ITP + H2O = IMP + diphosphate + H(+). Functionally, pyrophosphatase that catalyzes the hydrolysis of nucleoside triphosphates to their monophosphate derivatives, with a high preference for the non-canonical purine nucleotides XTP (xanthosine triphosphate), dITP (deoxyinosine triphosphate) and ITP. Seems to function as a house-cleaning enzyme that removes non-canonical purine nucleotides from the nucleotide pool, thus preventing their incorporation into DNA/RNA and avoiding chromosomal lesions. The polypeptide is dITP/XTP pyrophosphatase (Campylobacter concisus (strain 13826)).